A 308-amino-acid chain; its full sequence is tRNA pseudouridine synthase B (308 aa).

Catalysis depends on D47, which acts as the Nucleophile.

The protein belongs to the pseudouridine synthase TruB family. Type 1 subfamily.

It carries out the reaction uridine(55) in tRNA = pseudouridine(55) in tRNA. Responsible for synthesis of pseudouridine from uracil-55 in the psi GC loop of transfer RNAs. This chain is tRNA pseudouridine synthase B, found in Xanthomonas campestris pv. campestris (strain 8004).